Reading from the N-terminus, the 268-residue chain is Undecaprenyl-diphosphatase 1 (268 aa).

Transmembrane regions (helical) follow at residues 5 to 25, 43 to 63, 81 to 101, 107 to 127, 185 to 205, 214 to 234, and 248 to 268; these read TIVEALLLGLLEGLTEFIPVS, GKAFEILIQLGAILAILSVYF, HFVIGILIAFLPAAIIGALAH, VLFESPRLICTMLIIGGVILL, AEFSFFLAIPTMVGAFAFDLF, ADLPIIAIGFVAAFVTALFVV, and LFGWWRLVVGIVGLVALMIWG.

This sequence belongs to the UppP family.

The protein localises to the cell inner membrane. It catalyses the reaction di-trans,octa-cis-undecaprenyl diphosphate + H2O = di-trans,octa-cis-undecaprenyl phosphate + phosphate + H(+). Catalyzes the dephosphorylation of undecaprenyl diphosphate (UPP). Confers resistance to bacitracin. The chain is Undecaprenyl-diphosphatase 1 from Mesorhizobium japonicum (strain LMG 29417 / CECT 9101 / MAFF 303099) (Mesorhizobium loti (strain MAFF 303099)).